We begin with the raw amino-acid sequence, 134 residues long: Profilin-5 (134 aa).

Cys13 and Cys118 are oxidised to a cystine. Positions 84 to 100 match the Involved in PIP2 interaction motif; the sequence is AVIRGKKGSGGITIKKT. The residue at position 114 (Thr114) is a Phosphothreonine.

This sequence belongs to the profilin family. Occurs in many kinds of cells as a complex with monomeric actin in a 1:1 ratio. In terms of processing, phosphorylated by MAP kinases.

Its subcellular location is the cytoplasm. It is found in the cytoskeleton. Functionally, binds to actin and affects the structure of the cytoskeleton. At high concentrations, profilin prevents the polymerization of actin, whereas it enhances it at low concentrations. In Olea europaea (Common olive), this protein is Profilin-5.